Reading from the N-terminus, the 144-residue chain is Large ribosomal subunit protein uL15 (144 aa).

The interval 1–51 (MELNSIKPGSGSKHAKRRVGRGIGSGLGKTAGRGHKGQKSRAGGYHKVGFE) is disordered. Residues 21-31 (RGIGSGLGKTA) are compositionally biased toward gly residues.

It belongs to the universal ribosomal protein uL15 family. Part of the 50S ribosomal subunit.

Functionally, binds to the 23S rRNA. In Leptothrix cholodnii (strain ATCC 51168 / LMG 8142 / SP-6) (Leptothrix discophora (strain SP-6)), this protein is Large ribosomal subunit protein uL15.